Consider the following 120-residue polypeptide: NAD(P)H-quinone oxidoreductase subunit 3 (120 aa).

A run of 3 helical transmembrane segments spans residues 10 to 30, 64 to 84, and 89 to 109; these read FLGF…TNLI, MFAL…PWAV, and LGLL…IALA.

It belongs to the complex I subunit 3 family. NDH-1 can be composed of about 15 different subunits; different subcomplexes with different compositions have been identified which probably have different functions.

It is found in the cellular thylakoid membrane. The catalysed reaction is a plastoquinone + NADH + (n+1) H(+)(in) = a plastoquinol + NAD(+) + n H(+)(out). It catalyses the reaction a plastoquinone + NADPH + (n+1) H(+)(in) = a plastoquinol + NADP(+) + n H(+)(out). NDH-1 shuttles electrons from an unknown electron donor, via FMN and iron-sulfur (Fe-S) centers, to quinones in the respiratory and/or the photosynthetic chain. The immediate electron acceptor for the enzyme in this species is believed to be plastoquinone. Couples the redox reaction to proton translocation, and thus conserves the redox energy in a proton gradient. Cyanobacterial NDH-1 also plays a role in inorganic carbon-concentration. The chain is NAD(P)H-quinone oxidoreductase subunit 3 from Prochlorococcus marinus (strain MIT 9515).